We begin with the raw amino-acid sequence, 1046 residues long: Arrestin-related trafficking adapter 3 (1046 aa).

The disordered stretch occupies residues 115 to 141; it reads YPPTEQKSKKKMDASAPNESNNAANNF. The segment covering 128–140 has biased composition (low complexity); sequence ASAPNESNNAANN. Phosphoserine occurs at positions 155 and 162. 2 stretches are compositionally biased toward low complexity: residues 168–179 and 198–210; these read SGLSSLNLSPLG and RSSS…GPSR. Residues 168-230 form a disordered region; sequence SGLSSLNLSP…ATSPSVSHHN (63 aa). Phosphoserine occurs at positions 213 and 586. Residues 605 to 614 show a composition bias toward polar residues; it reads TRNSRQFNRN. Disordered stretches follow at residues 605–627 and 651–820; these read TRNS…IFNS and PLSP…FAHS. The span at 669-694 shows a compositional bias: low complexity; it reads FDFSSDFISDAASGTTTTEVSSSESS. The segment covering 734–785 has biased composition (basic and acidic residues); it reads KNSDKNSSETLNKKESMSKIEENKHKRETTPKKRENRDVKSLSTPQREESKD. Low complexity predominate over residues 802-811; it reads LSLSSSLHSS. Ser-826 and Ser-838 each carry phosphoserine. Residues 868-889 form a disordered region; it reads NHDKNELNRHSTNTSSTPASAR. A compositionally biased stretch (polar residues) spans 877–889; the sequence is HSTNTSSTPASAR. Residue Ser-900 is modified to Phosphoserine. A disordered region spans residues 986 to 1017; it reads QNSAESDHNNDIFTQGSGLTESSKNSDSEERF. Polar residues predominate over residues 996 to 1008; that stretch reads DIFTQGSGLTESS. A phosphoserine mark is found at Ser-1022 and Ser-1023.

It belongs to the ALY1 family. As to quaternary structure, interacts with PCL6, PCL7 and RSP5. Ubiquitinated by RSP5. In terms of processing, phosphorylated by the cyclin-CDKs PCL6-PHO85 and PCL7-PHO85.

It is found in the cytoplasm. Functionally, may regulate endocytosis by recruiting RSP5 ubiquitin ligase activity to specific plasma membrane proteins in response to extracellular stimuli. The protein is Arrestin-related trafficking adapter 3 (ALY2) of Saccharomyces cerevisiae (strain ATCC 204508 / S288c) (Baker's yeast).